A 443-amino-acid polypeptide reads, in one-letter code: Glutamyl-tRNA reductase (443 aa).

Residues 49 to 52, Ser-109, 114 to 116, and Gln-120 each bind substrate; these read TCNR and EPQ. The active-site Nucleophile is Cys-50. 189-194 serves as a coordination point for NADP(+); the sequence is GAGKMC. Residues 421-443 form a disordered region; it reads PDSQQTGGDSVEKDADSKQDLTS. The span at 430 to 443 shows a compositional bias: basic and acidic residues; it reads SVEKDADSKQDLTS.

The protein belongs to the glutamyl-tRNA reductase family. As to quaternary structure, homodimer.

The enzyme catalyses (S)-4-amino-5-oxopentanoate + tRNA(Glu) + NADP(+) = L-glutamyl-tRNA(Glu) + NADPH + H(+). It functions in the pathway porphyrin-containing compound metabolism; protoporphyrin-IX biosynthesis; 5-aminolevulinate from L-glutamyl-tRNA(Glu): step 1/2. Its function is as follows. Catalyzes the NADPH-dependent reduction of glutamyl-tRNA(Glu) to glutamate 1-semialdehyde (GSA). This is Glutamyl-tRNA reductase from Syntrophotalea carbinolica (strain DSM 2380 / NBRC 103641 / GraBd1) (Pelobacter carbinolicus).